Here is a 287-residue protein sequence, read N- to C-terminus: ATP synthase gamma chain (287 aa).

It belongs to the ATPase gamma chain family. In terms of assembly, F-type ATPases have 2 components, CF(1) - the catalytic core - and CF(0) - the membrane proton channel. CF(1) has five subunits: alpha(3), beta(3), gamma(1), delta(1), epsilon(1). CF(0) has three main subunits: a, b and c.

It is found in the cell inner membrane. Its function is as follows. Produces ATP from ADP in the presence of a proton gradient across the membrane. The gamma chain is believed to be important in regulating ATPase activity and the flow of protons through the CF(0) complex. The protein is ATP synthase gamma chain of Marinobacter nauticus (strain ATCC 700491 / DSM 11845 / VT8) (Marinobacter aquaeolei).